We begin with the raw amino-acid sequence, 259 residues long: MDKQTLVIKLGGALIENDEALTALFATLKTFLDEQHRPLVLVHGGGCLVDDLLKGLGLTSTKKNGLRVTPFEQIPFIAGALAGTANKMMMAKAIATDIPAVGLCLADGGLCQVTQLDPALGAVGDCQPGNPALVTGILGQGFLPVVSSIGITAQGQLMNVNADQAATAIAEALGADLVMLSDVSGILDGKGKLVPQLDKVTALDLMEKGVISDGMAVKVKAALHAAETLGKPVCVASWRYPDQLLKLLAGGAVGTQVAI.

Substrate contacts are provided by residues 45–46, Arg-67, and Asn-159; that span reads GG.

The protein belongs to the acetylglutamate kinase family. ArgB subfamily.

The protein localises to the cytoplasm. It catalyses the reaction N-acetyl-L-glutamate + ATP = N-acetyl-L-glutamyl 5-phosphate + ADP. It participates in amino-acid biosynthesis; L-arginine biosynthesis; N(2)-acetyl-L-ornithine from L-glutamate: step 2/4. Catalyzes the ATP-dependent phosphorylation of N-acetyl-L-glutamate. This chain is Acetylglutamate kinase, found in Aeromonas hydrophila subsp. hydrophila (strain ATCC 7966 / DSM 30187 / BCRC 13018 / CCUG 14551 / JCM 1027 / KCTC 2358 / NCIMB 9240 / NCTC 8049).